A 229-amino-acid polypeptide reads, in one-letter code: Heptaprenylglyceryl phosphate synthase (229 aa).

Residue Lys12 participates in sn-glycerol 1-phosphate binding. Asp14 and Thr40 together coordinate Mg(2+). Residues 159-164 (YIEYSG), Gly189, and 209-210 (GN) contribute to the sn-glycerol 1-phosphate site.

It belongs to the GGGP/HepGP synthase family. Group I subfamily. Homodimer. The cofactor is Mg(2+).

It carries out the reaction sn-glycerol 1-phosphate + all-trans-heptaprenyl diphosphate = 3-heptaprenyl-sn-glycero-1-phosphate + diphosphate. It participates in membrane lipid metabolism; glycerophospholipid metabolism. Its function is as follows. Prenyltransferase that catalyzes in vivo the transfer of the heptaprenyl moiety of heptaprenyl pyrophosphate (HepPP; 35 carbon atoms) to the C3 hydroxyl of sn-glycerol-1-phosphate (G1P), producing heptaprenylglyceryl phosphate (HepGP). This reaction is an ether-bond-formation step in the biosynthesis of archaea-type G1P-based membrane lipids found in Bacillales. The chain is Heptaprenylglyceryl phosphate synthase from Oceanobacillus iheyensis (strain DSM 14371 / CIP 107618 / JCM 11309 / KCTC 3954 / HTE831).